The chain runs to 301 residues: Protein translocase subunit SecF (301 aa).

Helical transmembrane passes span 17 to 37 (YIAL…IFQI), 137 to 157 (DALF…AIRF), 163 to 183 (IGAT…FYIL), 190 to 210 (IFIS…VVVF), 239 to 261 (LSRT…FFGG), and 272 to 292 (ILGI…VVLL).

It belongs to the SecD/SecF family. SecF subfamily. In terms of assembly, forms a complex with SecD. Part of the essential Sec protein translocation apparatus which comprises SecA, SecYEG and auxiliary proteins SecDF. Other proteins may also be involved.

The protein localises to the cell inner membrane. Functionally, part of the Sec protein translocase complex. Interacts with the SecYEG preprotein conducting channel. SecDF uses the proton motive force (PMF) to complete protein translocation after the ATP-dependent function of SecA. This Thermodesulfovibrio yellowstonii (strain ATCC 51303 / DSM 11347 / YP87) protein is Protein translocase subunit SecF.